We begin with the raw amino-acid sequence, 110 residues long: Flowering-promoting factor 1 (110 aa).

It belongs to the FPF1 family.

Modulates the competence to flowering of apical meristems. Involved in a GA-dependent response in apical meristems during the transition to flowering. The sequence is that of Flowering-promoting factor 1 (FPF1) from Arabidopsis thaliana (Mouse-ear cress).